Here is an 819-residue protein sequence, read N- to C-terminus: Leucine--tRNA ligase (819 aa).

The short motif at 36 to 46 is the 'HIGH' region element; it reads PYPSGKIHMGH. The short motif at 586-590 is the 'KMSKS' region element; sequence KMSKS. Residue K589 coordinates ATP.

The protein belongs to the class-I aminoacyl-tRNA synthetase family.

The protein localises to the cytoplasm. It carries out the reaction tRNA(Leu) + L-leucine + ATP = L-leucyl-tRNA(Leu) + AMP + diphosphate. The polypeptide is Leucine--tRNA ligase (Wolbachia pipientis subsp. Culex pipiens (strain wPip)).